The chain runs to 391 residues: Saxitoxin and tetrodotoxin-binding protein 2 (391 aa).

Residues 1 to 20 form the signal peptide; the sequence is MGAVPGVVLLLMLAVLGIRA. Tandem repeats lie at residues 24 to 202 and 203 to 391. Residues Asn-41, Asn-54, Asn-63, Asn-97, Asn-234, Asn-268, Asn-277, and Asn-307 are each glycosylated (N-linked (GlcNAc...) asparagine).

As to quaternary structure, homodimer or heterodimer of PSTBP1 and PSTBP2. Post-translationally, glycosylated.

The protein resides in the secreted. Functionally, binds both saxitoxin and tetradotoxin. May play a role in toxin accumulation and/or excretion. The sequence is that of Saxitoxin and tetrodotoxin-binding protein 2 (psbp2) from Takifugu pardalis (Panther puffer).